The primary structure comprises 965 residues: Villin-3 (965 aa).

Gelsolin-like repeat units lie at residues 27-79, 150-190, 262-304, 401-452, 533-573, and 635-676; these read ENFE…DEAG, VHLK…QERA, GQVE…EERK, ANSK…EDQE, NKAL…EQQE, and FQVE…KEKQ. Low complexity-rich tracts occupy residues 769-780 and 808-828; these read AFNSSSGRTSSP and SSPS…ASQR. Disordered stretches follow at residues 769 to 828 and 840 to 906; these read AFNS…ASQR and TAEK…GVTF. Residues 865–879 show a composition bias toward acidic residues; it reads EATEEATEAKEEEEV. At Ser880 the chain carries Phosphoserine. One can recognise an HP domain in the interval 900–965; that stretch reads ETTGVTFTYE…DLLKKKFNLF (66 aa).

It belongs to the villin/gelsolin family. Expressed in all tissues examined, including root hairs.

It is found in the cytoplasm. The protein localises to the cytoskeleton. Functionally, binds actin and actin filament bundles in a Ca(2+)-insensitive manner, but severs actin filaments in a calcium-dependent manner, regardless of the presence or not of VLN1 (AC O81643). Acts redundantly with VLN2 (AC O81644) to generate thick actin filament bundles, to regulate directional organ growth and in sclerenchyma development. This chain is Villin-3, found in Arabidopsis thaliana (Mouse-ear cress).